The sequence spans 309 residues: Ferrochelatase (309 aa).

Fe cation is bound by residues histidine 185 and glutamate 264.

The protein belongs to the ferrochelatase family.

The protein resides in the cytoplasm. The enzyme catalyses heme b + 2 H(+) = protoporphyrin IX + Fe(2+). Its pathway is porphyrin-containing compound metabolism; protoheme biosynthesis; protoheme from protoporphyrin-IX: step 1/1. Catalyzes the ferrous insertion into protoporphyrin IX. In Aquifex aeolicus (strain VF5), this protein is Ferrochelatase.